A 681-amino-acid chain; its full sequence is Protein asunder (681 aa).

A disordered region spans residues 574-619; sequence PGASHLRSYTESPLSPERLEPTSSASNSSSSILKASKRRMSSSGQR. Residues 606 to 612 carry the Nuclear localization signal (NLS) motif; that stretch reads LKASKRR.

This sequence belongs to the Integrator subunit 13 family. Belongs to the multiprotein complex Integrator, at least composed of IntS1, IntS2, IntS3, IntS4, omd/IntS5, IntS6, defl/IntS7, IntS8, IntS9, IntS10, IntS11, IntS12, asun/IntS13, IntS14 and IntS15. The core complex associates with protein phosphatase 2A subunits mts/PP2A and Pp2A-29B, to form the Integrator-PP2A (INTAC) complex. In terms of processing, phosphorylated.

The protein localises to the nucleus. Its subcellular location is the cytoplasm. It is found in the perinuclear region. In terms of biological role, component of the integrator complex, a multiprotein complex that terminates RNA polymerase II (Pol II) transcription in the promoter-proximal region of genes. The integrator complex provides a quality checkpoint during transcription elongation by driving premature transcription termination of transcripts that are unfavorably configured for transcriptional elongation: the complex terminates transcription by (1) catalyzing dephosphorylation of the C-terminal domain (CTD) of Pol II subunit Polr2A/Rbp1 and Spt5, and (2) degrading the exiting nascent RNA transcript via endonuclease activity. The integrator complex is also involved in the 3'-end processing of the U7 snRNA, and also the spliceosomal snRNAs U1, U2, U4 and U5. The protein is Protein asunder (asun) of Drosophila virilis (Fruit fly).